We begin with the raw amino-acid sequence, 593 residues long: Aspartate--tRNA(Asp/Asn) ligase (593 aa).

Residue Glu-173 participates in L-aspartate binding. The tract at residues 197-200 (QLFK) is aspartate. Residue Arg-219 participates in L-aspartate binding. ATP is bound by residues 219–221 (RDE) and Gln-228. His-451 is an L-aspartate binding site. Position 485 (Glu-485) interacts with ATP. Arg-492 serves as a coordination point for L-aspartate. 537-540 (GIDR) serves as a coordination point for ATP.

This sequence belongs to the class-II aminoacyl-tRNA synthetase family. Type 1 subfamily. In terms of assembly, homodimer.

It localises to the cytoplasm. It catalyses the reaction tRNA(Asx) + L-aspartate + ATP = L-aspartyl-tRNA(Asx) + AMP + diphosphate. In terms of biological role, aspartyl-tRNA synthetase with relaxed tRNA specificity since it is able to aspartylate not only its cognate tRNA(Asp) but also tRNA(Asn). Reaction proceeds in two steps: L-aspartate is first activated by ATP to form Asp-AMP and then transferred to the acceptor end of tRNA(Asp/Asn). This chain is Aspartate--tRNA(Asp/Asn) ligase, found in Legionella pneumophila (strain Paris).